The chain runs to 262 residues: Sperm microtubule inner protein 6 (262 aa).

Belongs to the SPMIP6 family. In terms of assembly, microtubule inner protein component of sperm flagellar doublet microtubules. Interacts with alpha-tubulin. As to expression, expressed in testis. Strongly expressed in ciliated epithelial cells with lower levels in goblet cells (at protein level).

Its subcellular location is the cytoplasm. The protein localises to the cytoskeleton. It localises to the nucleus. The protein resides in the mitochondrion. It is found in the flagellum axoneme. Functionally, may participate in intramanchette transport and midpiece formation of the sperm tail. May play a potential role in somatic cell proliferation. The sequence is that of Sperm microtubule inner protein 6 from Homo sapiens (Human).